A 429-amino-acid chain; its full sequence is MSFYRSWIGGTGDLVKKYTSSIKDDVELAEEVVRVMKGHVAHLVEIGSIPKEAGERIIKALEEVDASELLKEEFEDVHEALEKWLIDKLGEEIGGWVGLGRSRNDHVAAAIRLAALRKTERLKEEACRLRCALAKRALEYADCPMPSFTHFQPAQVITFGHYLLAIDELLAEFLHILRGVEDLLNRSPLGAGPAGGVRTPLDRRRLAELVGFKEVVENALYASGSRFFALALASAVVSFLAELSRAVDDFIRWNSPVVGYVNSPDSHVSTSSIMPHKRNLVTLEVLRARIAEALGHFAAMSALVMKVGMGYSLDLQEATRHLWAVLNIATEGMAVFRDFIENMAFNCEKSRKDAEAYFTTSSDTAEDEALKGVPFRKAYFQLASAIKAGTARLLTINEALKRPVYGSANTEEVKRAASRRLALCRPKPL.

Belongs to the lyase 1 family. Argininosuccinate lyase subfamily.

The protein localises to the cytoplasm. The catalysed reaction is 2-(N(omega)-L-arginino)succinate = fumarate + L-arginine. The protein operates within amino-acid biosynthesis; L-arginine biosynthesis; L-arginine from L-ornithine and carbamoyl phosphate: step 3/3. In Pyrobaculum aerophilum (strain ATCC 51768 / DSM 7523 / JCM 9630 / CIP 104966 / NBRC 100827 / IM2), this protein is Argininosuccinate lyase.